Consider the following 205-residue polypeptide: Histidine biosynthesis bifunctional protein HisIE (205 aa).

The interval Met-1–Ile-115 is phosphoribosyl-AMP cyclohydrolase. A phosphoribosyl-ATP pyrophosphohydrolase region spans residues Leu-116–Lys-205.

This sequence in the N-terminal section; belongs to the PRA-CH family. It in the C-terminal section; belongs to the PRA-PH family.

It localises to the cytoplasm. It carries out the reaction 1-(5-phospho-beta-D-ribosyl)-ATP + H2O = 1-(5-phospho-beta-D-ribosyl)-5'-AMP + diphosphate + H(+). It catalyses the reaction 1-(5-phospho-beta-D-ribosyl)-5'-AMP + H2O = 1-(5-phospho-beta-D-ribosyl)-5-[(5-phospho-beta-D-ribosylamino)methylideneamino]imidazole-4-carboxamide. Its pathway is amino-acid biosynthesis; L-histidine biosynthesis; L-histidine from 5-phospho-alpha-D-ribose 1-diphosphate: step 2/9. It participates in amino-acid biosynthesis; L-histidine biosynthesis; L-histidine from 5-phospho-alpha-D-ribose 1-diphosphate: step 3/9. This chain is Histidine biosynthesis bifunctional protein HisIE, found in Caldanaerobacter subterraneus subsp. tengcongensis (strain DSM 15242 / JCM 11007 / NBRC 100824 / MB4) (Thermoanaerobacter tengcongensis).